Reading from the N-terminus, the 372-residue chain is N-methyl-L-tryptophan oxidase (372 aa).

4 to 34 (DLIIIGSGSVGAAAGYYATRAGLNVLMTDAH) contacts FAD. Residue Cys308 is modified to S-8alpha-FAD cysteine.

The protein belongs to the MSOX/MTOX family. MTOX subfamily. In terms of assembly, monomer. FAD serves as cofactor.

It carries out the reaction N(alpha)-methyl-L-tryptophan + O2 + H2O = L-tryptophan + formaldehyde + H2O2. In terms of biological role, catalyzes the oxidative demethylation of N-methyl-L-tryptophan. This Shigella boydii serotype 18 (strain CDC 3083-94 / BS512) protein is N-methyl-L-tryptophan oxidase.